The chain runs to 195 residues: Neurturin (195 aa).

The N-terminal stretch at 1 to 19 is a signal peptide; sequence MRRWKAAALVSLICSSLLS. A propeptide spanning residues 20–95 is cleaved from the precursor; that stretch reads VWMCQEGLLL…RAGPRRRRAR (76 aa). 3 disulfides stabilise this stretch: cysteine 101–cysteine 163, cysteine 128–cysteine 192, and cysteine 132–cysteine 194. Heparan sulfate group is bound by residues arginine 147, arginine 156, and arginine 158.

Belongs to the TGF-beta family. GDNF subfamily. As to quaternary structure, homodimer; disulfide-linked. Interacts with GFRA2 coreceptor and RET: forms a 2:2:2 ternary complex composed of NRTN ligand, GFRA2 and RET receptor. Also forms a 4:4:4 tetrameric complex composed of 4 copies of NRTN ligand, GFRA2 and RET receptor, which prevents endocytosis of RET. In terms of tissue distribution, widespread distribution.

It localises to the secreted. In terms of biological role, growth factor that supports the survival of sympathetic neurons in culture. May regulate the development and maintenance of the CNS. Involved in the development of the neural crest. Might control the size of non-neuronal cell population such as haemopoietic cells. Acts by binding to its coreceptor, GFRA2, leading to autophosphorylation and activation of the RET receptor. Heparan sulfate-binding is required for signaling. This Mus musculus (Mouse) protein is Neurturin (Nrtn).